We begin with the raw amino-acid sequence, 82 residues long: Delta-actitoxin-Aeq2a (82 aa).

A signal peptide spans 1 to 19; the sequence is MNRLMILVFAAVFLALASA. Residues 20-26 constitute a propeptide that is removed on maturation; sequence DEDVDIA. Intrachain disulfides connect Cys-32/Cys-79, Cys-34/Cys-69, and Cys-62/Cys-80.

Belongs to the sea anemone sodium channel inhibitory toxin family. Type I subfamily.

The protein resides in the secreted. It is found in the nematocyst. In terms of biological role, binds specifically to voltage-gated sodium channels (Nav), thereby delaying their inactivation during signal transduction. Causes death to crabs (minimum lethal dose of 25 ug/kg) and mice. In Actinia equina (Beadlet anemone), this protein is Delta-actitoxin-Aeq2a.